A 208-amino-acid polypeptide reads, in one-letter code: Small ribosomal subunit protein uS4 (208 aa).

Residues 30–49 (KSALEKRPYPPGQHGQRRSK) are disordered. One can recognise an S4 RNA-binding domain in the interval 98 to 161 (RRLDNVVYRM…KNNPQIQRSL (64 aa)).

It belongs to the universal ribosomal protein uS4 family. As to quaternary structure, part of the 30S ribosomal subunit. Contacts protein S5. The interaction surface between S4 and S5 is involved in control of translational fidelity.

In terms of biological role, one of the primary rRNA binding proteins, it binds directly to 16S rRNA where it nucleates assembly of the body of the 30S subunit. Functionally, with S5 and S12 plays an important role in translational accuracy. This is Small ribosomal subunit protein uS4 from Nitratiruptor sp. (strain SB155-2).